The sequence spans 614 residues: MGKIIGIDLGTTNSCVAVMEGGEPTVIANSEGARTTPSVVSFQANGERLVGQVAKRQAITNPDKTVISIKRHMGTGYKVDIDGKQYSPQEISAMVLQKIKADAESYLGETVTQAVITVPAYFNDSQRQATKDAGKIAGLEVLRIINEPTAASLAYGLDKTDSAHKILVYDLGGGTFDVSILDLGDGVFEVLSTNGDTKLGGDDFDEKIMKYIADEFKASNGIDLMQDKMAVQRLKEASEKAKIELSASQQTNINLPFITADATGPKHIDLTLSRAKFNEITHDLVERSIEPMRKALADAKLSLNDIDKIILVGGSTRIPAVVEAVKNFTGKEPSKGVNPDECVAVGAAIQAGVLTGEVKDVVLLDVTPLTLGIETAGGIATPLIERNTTIPTKKSQVFSTAADNQTSVEINVVQGERQMAMDNKSLGQFTLSGIAPAPRGIPQIEVTFDIDANGIVKVSALDKGTGKEANITITASTNLSDDEVDKAVKEAEKFAEEDKKRKEKVEAVNNADQTIYQIEKTLNEVGDKATEDEKAAVRAKIEDLKKVKDGDDVEATKAAIEAVNQSFYPIATKMYQQAGGAEGAADPNAAAGGAQSAPHDDNVVDADFKVDEDK.

Thr175 bears the Phosphothreonine; by autocatalysis mark. Positions 577-614 (QAGGAEGAADPNAAAGGAQSAPHDDNVVDADFKVDEDK) are disordered. The span at 583-597 (GAADPNAAAGGAQSA) shows a compositional bias: low complexity. The segment covering 598–614 (PHDDNVVDADFKVDEDK) has biased composition (basic and acidic residues).

It belongs to the heat shock protein 70 family.

Its function is as follows. Acts as a chaperone. This chain is Chaperone protein DnaK, found in Clostridium beijerinckii (strain ATCC 51743 / NCIMB 8052) (Clostridium acetobutylicum).